A 483-amino-acid polypeptide reads, in one-letter code: Argininosuccinate lyase (483 aa).

The protein belongs to the lyase 1 family. Argininosuccinate lyase subfamily.

The protein localises to the cytoplasm. It catalyses the reaction 2-(N(omega)-L-arginino)succinate = fumarate + L-arginine. The protein operates within amino-acid biosynthesis; L-arginine biosynthesis; L-arginine from L-ornithine and carbamoyl phosphate: step 3/3. This Albidiferax ferrireducens (strain ATCC BAA-621 / DSM 15236 / T118) (Rhodoferax ferrireducens) protein is Argininosuccinate lyase.